The following is a 344-amino-acid chain: Tryptophan--tRNA ligase (344 aa).

ATP contacts are provided by residues 20 to 22 (QPS) and 28 to 29 (GN). Residues 21–29 (PSGALHLGN) carry the 'HIGH' region motif. Asp144 serves as a coordination point for L-tryptophan. Residues 156-158 (GED), Val197, and 206-210 (KMSKS) contribute to the ATP site. The short motif at 206-210 (KMSKS) is the 'KMSKS' region element.

Belongs to the class-I aminoacyl-tRNA synthetase family. Homodimer.

The protein localises to the cytoplasm. The enzyme catalyses tRNA(Trp) + L-tryptophan + ATP = L-tryptophyl-tRNA(Trp) + AMP + diphosphate + H(+). In terms of biological role, catalyzes the attachment of tryptophan to tRNA(Trp). This Caulobacter vibrioides (strain ATCC 19089 / CIP 103742 / CB 15) (Caulobacter crescentus) protein is Tryptophan--tRNA ligase.